The primary structure comprises 160 residues: Ribosomal RNA large subunit methyltransferase H (160 aa).

Leucine 76 and glycine 108 together coordinate S-adenosyl-L-methionine.

It belongs to the RNA methyltransferase RlmH family. As to quaternary structure, homodimer.

It is found in the cytoplasm. The catalysed reaction is pseudouridine(1915) in 23S rRNA + S-adenosyl-L-methionine = N(3)-methylpseudouridine(1915) in 23S rRNA + S-adenosyl-L-homocysteine + H(+). Functionally, specifically methylates the pseudouridine at position 1915 (m3Psi1915) in 23S rRNA. This Nitrobacter hamburgensis (strain DSM 10229 / NCIMB 13809 / X14) protein is Ribosomal RNA large subunit methyltransferase H.